Consider the following 300-residue polypeptide: Energy-coupling factor transporter ATP-binding protein EcfA2 (300 aa).

Residues 3-258 (IKAKNIVKIY…NKFLIENKML (256 aa)) form the ABC transporter domain. 40-47 (GQTGSGKT) lines the ATP pocket.

Belongs to the ABC transporter superfamily. Energy-coupling factor EcfA family. In terms of assembly, forms a stable energy-coupling factor (ECF) transporter complex composed of 2 membrane-embedded substrate-binding proteins (S component), 2 ATP-binding proteins (A component) and 2 transmembrane proteins (T component).

The protein localises to the cell membrane. In terms of biological role, ATP-binding (A) component of a common energy-coupling factor (ECF) ABC-transporter complex. Unlike classic ABC transporters this ECF transporter provides the energy necessary to transport a number of different substrates. The polypeptide is Energy-coupling factor transporter ATP-binding protein EcfA2 (Mesomycoplasma hyopneumoniae (strain 232) (Mycoplasma hyopneumoniae)).